A 254-amino-acid polypeptide reads, in one-letter code: DNA repair protein RecO (254 aa).

Belongs to the RecO family.

Its function is as follows. Involved in DNA repair and RecF pathway recombination. The chain is DNA repair protein RecO from Gluconacetobacter diazotrophicus (strain ATCC 49037 / DSM 5601 / CCUG 37298 / CIP 103539 / LMG 7603 / PAl5).